Consider the following 382-residue polypeptide: 4-hydroxybutyrate dehydrogenase (382 aa).

NAD(+) contacts are provided by residues Asp37, Asn67, 94–98, 138–142, and Lys159; these read GSSID and TTSGT. Fe cation-binding residues include Asp193, His197, His261, and His280. Residue His280 participates in NAD(+) binding.

This sequence belongs to the iron-containing alcohol dehydrogenase family. It depends on Fe cation as a cofactor.

The enzyme catalyses 4-hydroxybutanoate + NAD(+) = succinate semialdehyde + NADH + H(+). Shows competitive inhibition of GHBDH activity by the product succinic semialdehyde, and non-competitive inhibitions by the three other substrate-product combinations. The conversion of GHB to SSA is activated by two different saturating purified nudix hydrolases, B.methanolicus activator ACT and E.coli NudF. The nudix hydrolases do not activate the reverse reaction. In terms of biological role, involved in the degradation of 4-hydroxybutyrate. Catalyzes the interconversion of gamma-hydroxybutyrate (GHB) and succinic semialdehyde (SSA). This Cupriavidus necator (Alcaligenes eutrophus) protein is 4-hydroxybutyrate dehydrogenase.